The primary structure comprises 237 residues: Phosphoribosylaminoimidazole-succinocarboxamide synthase (237 aa).

It belongs to the SAICAR synthetase family.

It catalyses the reaction 5-amino-1-(5-phospho-D-ribosyl)imidazole-4-carboxylate + L-aspartate + ATP = (2S)-2-[5-amino-1-(5-phospho-beta-D-ribosyl)imidazole-4-carboxamido]succinate + ADP + phosphate + 2 H(+). Its pathway is purine metabolism; IMP biosynthesis via de novo pathway; 5-amino-1-(5-phospho-D-ribosyl)imidazole-4-carboxamide from 5-amino-1-(5-phospho-D-ribosyl)imidazole-4-carboxylate: step 1/2. The polypeptide is Phosphoribosylaminoimidazole-succinocarboxamide synthase (Yersinia enterocolitica serotype O:8 / biotype 1B (strain NCTC 13174 / 8081)).